The chain runs to 993 residues: Glycine dehydrogenase (decarboxylating) (993 aa).

Lys715 carries the N6-(pyridoxal phosphate)lysine modification.

This sequence belongs to the GcvP family. As to quaternary structure, the glycine cleavage system is composed of four proteins: P, T, L and H. Pyridoxal 5'-phosphate serves as cofactor.

It carries out the reaction N(6)-[(R)-lipoyl]-L-lysyl-[glycine-cleavage complex H protein] + glycine + H(+) = N(6)-[(R)-S(8)-aminomethyldihydrolipoyl]-L-lysyl-[glycine-cleavage complex H protein] + CO2. The glycine cleavage system catalyzes the degradation of glycine. The P protein binds the alpha-amino group of glycine through its pyridoxal phosphate cofactor; CO(2) is released and the remaining methylamine moiety is then transferred to the lipoamide cofactor of the H protein. The sequence is that of Glycine dehydrogenase (decarboxylating) from Xylella fastidiosa (strain Temecula1 / ATCC 700964).